The sequence spans 224 residues: PKHD-type hydroxylase Tgr7_2199 (224 aa).

Positions K78 to S176 constitute a Fe2OG dioxygenase domain. Residues H96, D98, and H157 each contribute to the Fe cation site. R167 provides a ligand contact to 2-oxoglutarate.

Requires Fe(2+) as cofactor. L-ascorbate serves as cofactor.

The chain is PKHD-type hydroxylase Tgr7_2199 from Thioalkalivibrio sulfidiphilus (strain HL-EbGR7).